A 513-amino-acid chain; its full sequence is 2,3-bisphosphoglycerate-independent phosphoglycerate mutase (513 aa).

Mn(2+) contacts are provided by D12 and S62. The Phosphoserine intermediate role is filled by S62. Substrate contacts are provided by residues H123, 153–154 (RD), R185, R191, 261–264 (RSDR), and K335. Residues D402, H406, D443, H444, and H462 each contribute to the Mn(2+) site.

It belongs to the BPG-independent phosphoglycerate mutase family. In terms of assembly, monomer. The cofactor is Mn(2+).

It catalyses the reaction (2R)-2-phosphoglycerate = (2R)-3-phosphoglycerate. Its pathway is carbohydrate degradation; glycolysis; pyruvate from D-glyceraldehyde 3-phosphate: step 3/5. In terms of biological role, catalyzes the interconversion of 2-phosphoglycerate and 3-phosphoglycerate. The chain is 2,3-bisphosphoglycerate-independent phosphoglycerate mutase from Thiobacillus denitrificans (strain ATCC 25259 / T1).